A 419-amino-acid chain; its full sequence is Multifunctional CCA protein (419 aa).

ATP is bound by residues Gly8 and Arg11. CTP contacts are provided by Gly8 and Arg11. Positions 21 and 23 each coordinate Mg(2+). Positions 91, 141, and 144 each coordinate ATP. 3 residues coordinate CTP: Arg91, Arg141, and Arg144. An HD domain is found at 230-331; sequence TGVHVMMVLD…VRLLERCDAL (102 aa).

Belongs to the tRNA nucleotidyltransferase/poly(A) polymerase family. Bacterial CCA-adding enzyme type 1 subfamily. Monomer. Can also form homodimers and oligomers. Mg(2+) serves as cofactor. The cofactor is Ni(2+).

It catalyses the reaction a tRNA precursor + 2 CTP + ATP = a tRNA with a 3' CCA end + 3 diphosphate. The catalysed reaction is a tRNA with a 3' CCA end + 2 CTP + ATP = a tRNA with a 3' CCACCA end + 3 diphosphate. In terms of biological role, catalyzes the addition and repair of the essential 3'-terminal CCA sequence in tRNAs without using a nucleic acid template. Adds these three nucleotides in the order of C, C, and A to the tRNA nucleotide-73, using CTP and ATP as substrates and producing inorganic pyrophosphate. tRNA 3'-terminal CCA addition is required both for tRNA processing and repair. Also involved in tRNA surveillance by mediating tandem CCA addition to generate a CCACCA at the 3' terminus of unstable tRNAs. While stable tRNAs receive only 3'-terminal CCA, unstable tRNAs are marked with CCACCA and rapidly degraded. The polypeptide is Multifunctional CCA protein (Paracidovorax citrulli (strain AAC00-1) (Acidovorax citrulli)).